The primary structure comprises 302 residues: Glutaminase (302 aa).

Residues S61, N111, E155, N162, Y186, Y238, and V256 each contribute to the substrate site.

Belongs to the glutaminase family. As to quaternary structure, homotetramer.

It catalyses the reaction L-glutamine + H2O = L-glutamate + NH4(+). The protein is Glutaminase of Pseudomonas fluorescens (strain ATCC BAA-477 / NRRL B-23932 / Pf-5).